A 231-amino-acid chain; its full sequence is Small ribosomal subunit protein uS3 (231 aa).

A KH type-2 domain is found at 39–107 (IRKHIMKAIP…DVSLNIVEIR (69 aa)).

This sequence belongs to the universal ribosomal protein uS3 family. As to quaternary structure, part of the 30S ribosomal subunit. Forms a tight complex with proteins S10 and S14.

Its function is as follows. Binds the lower part of the 30S subunit head. Binds mRNA in the 70S ribosome, positioning it for translation. This is Small ribosomal subunit protein uS3 from Rhizorhabdus wittichii (strain DSM 6014 / CCUG 31198 / JCM 15750 / NBRC 105917 / EY 4224 / RW1) (Sphingomonas wittichii).